Here is a 608-residue protein sequence, read N- to C-terminus: Putative pentatricopeptide repeat-containing protein At1g16830 (608 aa).

PPR repeat units lie at residues 107-141, 142-172, 173-210, 211-245, 246-280, 281-315, 316-350, 351-381, 383-417, 418-452, 453-487, 488-522, and 523-557; these read KPRV…GFVP, NTRA…IRFR, NFFS…GFYP, NRER…GISV, SVNV…GCSP, NLVT…GLAP, DIVL…KLVP, DQYT…IGTD, DLVT…DFAL, DCYT…KKHL, DAHF…KYPL, DVVS…GIYP, and NRRT…GVEL.

It belongs to the PPR family. P subfamily.

This is Putative pentatricopeptide repeat-containing protein At1g16830 from Arabidopsis thaliana (Mouse-ear cress).